A 389-amino-acid chain; its full sequence is MMLLSQPGIWLLVSLFLCSSVNSISLWKSHPLVAGSNEPDQKRPDTPSSPRPLGITGAALLNYFEQNLRTMEVPDTAGVPQDSAYYTALTHYLGLCGARSENCDPGQSAVAKLTRDVPVLTRVHSHNDYWRRVPLLQALAYGVASVEADVWLENNGTTLLVGHNRVFLEPAHDLGRLYIEPITRMLQEVNCKSENKGDPYGIFYNAPEEQLLLYIDFKSLDRKLTYKLLLDYLKPLIDNNFISYYDMDAKRFVSRPVTVVLTGNYPSDEEIGVPSPRRYTFLDAPLGRLSSVGDEFTANNVSVVASSSLLELMLRCGKASNPSLTEQTAWESYGCLVEYVREAHRRDLRARIWGLPDWPVSTRENLWDMLTDMGVDYLNVDDLDAVSKF.

The first 23 residues, 1–23 (MMLLSQPGIWLLVSLFLCSSVNS), serve as a signal peptide directing secretion.

This sequence belongs to the AIM6 family.

The protein is Altered inheritance of mitochondria protein 6 (AIM6) of Eremothecium gossypii (strain ATCC 10895 / CBS 109.51 / FGSC 9923 / NRRL Y-1056) (Yeast).